Consider the following 302-residue polypeptide: Glutaminase (302 aa).

Substrate contacts are provided by Ser61, Asn111, Glu155, Asn162, Tyr186, Tyr238, and Val256.

This sequence belongs to the glutaminase family. As to quaternary structure, homotetramer.

The enzyme catalyses L-glutamine + H2O = L-glutamate + NH4(+). The polypeptide is Glutaminase (Ectopseudomonas mendocina (strain ymp) (Pseudomonas mendocina)).